Consider the following 140-residue polypeptide: Secreted RxLR effector protein 37 (140 aa).

An N-terminal signal peptide occupies residues 1-22; sequence MTYRLPFVAVILFVTAKHVVLA. A RxLR-dEER motif is present at residues 57–76; that stretch reads RFLRQLEKKPGVNDKRDEER.

It belongs to the RxLR effector family.

It is found in the secreted. Its subcellular location is the host nucleus. The protein localises to the host cytoplasm. Its function is as follows. Secreted effector that completely suppresses the host cell death induced by cell death-inducing proteins. This chain is Secreted RxLR effector protein 37, found in Plasmopara viticola (Downy mildew of grapevine).